The primary structure comprises 403 residues: Phospholipase A1-II 2 (403 aa).

The active-site Acyl-ester intermediate is serine 218. Catalysis depends on charge relay system residues serine 218, aspartate 286, and histidine 323. The disordered stretch occupies residues 381–403 (GPDGRWVLQDHEPDDDDDDDDDD). Acidic residues predominate over residues 392–403 (EPDDDDDDDDDD).

It belongs to the AB hydrolase superfamily. Lipase family.

It is found in the cytoplasm. Acylhydrolase that catalyzes the hydrolysis of phospholipids at the sn-1 position. The sequence is that of Phospholipase A1-II 2 from Oryza sativa subsp. indica (Rice).